The primary structure comprises 612 residues: DNA damage checkpoint protein 1 (612 aa).

S436 bears the Phosphoserine mark. The segment at 576–612 is disordered; it reads GLLNSQNDTSNHKKQDNKEMEDGLGLTQVEKPRGIFD. A compositionally biased stretch (basic and acidic residues) spans 585 to 596; the sequence is SNHKKQDNKEME.

This sequence belongs to the DDC1 family. As to quaternary structure, component of the checkpoint clamp complex composed of DDC1, MEC3 and RAD17. The interaction with MEC3 is performed in a RAD17-dependent manner. The checkpoint clamp complex loads onto DNA in an ATP-dependent manner through its interaction with the RFC-RAD4 checkpoint clamp loader complex. Interacts with the DNA polymerase zeta subunit REV7 and DPB11. Post-translationally, phosphorylated during cell cycle S-phase and in response to DNA damage. This phosphorylation is MEC14 dependent. Also hosphorylated by CDC28.

Its subcellular location is the cytoplasm. It localises to the nucleus. In terms of biological role, component of the checkpoint clamp complex involved in the surveillance mechanism that allows the DNA repair pathways to act to restore the integrity of the DNA prior to DNA synthesis or separation of the replicated chromosomes. Associates with sites of DNA damage and modulates the MEC1 signaling pathway and the activation of RAD53 in response to DNA damage at phase G1. The complex also physically regulates DNA polymerase zeta-dependent mutagenesis by controlling the access of polymerase zeta to damaged DNA. This chain is DNA damage checkpoint protein 1 (DDC1), found in Saccharomyces cerevisiae (strain ATCC 204508 / S288c) (Baker's yeast).